The chain runs to 322 residues: Peptidase 1 (322 aa).

Positions 1-18 (MKFVLAIASLLVLSVVYA) are cleaved as a signal peptide. Positions 19 to 99 (YPSEIRTFEE…LKKEFDLDAG (81 aa)) are excised as a propeptide. An intrachain disulfide couples C131 to C171. The active site involves C134. N152 is a glycosylation site (N-linked (GlcNAc...) asparagine). Active-site residues include H270 and N290.

Belongs to the peptidase C1 family. Expressed in the gut.

It localises to the secreted. It carries out the reaction Broad endopeptidase specificity.. Probable thiol protease. The chain is Peptidase 1 from Psoroptes ovis (Sheep scab mite).